The chain runs to 155 residues: Small ribosomal subunit protein uS7c (155 aa).

The protein belongs to the universal ribosomal protein uS7 family. As to quaternary structure, part of the 30S ribosomal subunit.

It is found in the plastid. The protein resides in the chloroplast. In terms of biological role, one of the primary rRNA binding proteins, it binds directly to 16S rRNA where it nucleates assembly of the head domain of the 30S subunit. The polypeptide is Small ribosomal subunit protein uS7c (rps7) (Hydrastis canadensis (Goldenseal)).